The sequence spans 362 residues: F-box protein At1g54550 (362 aa).

Residues 1 to 47 (MATVTDLPDDLVREIFSRVPLTSLRAVRSTCKKWNAISKYDILGKKA) form the F-box domain.

The sequence is that of F-box protein At1g54550 from Arabidopsis thaliana (Mouse-ear cress).